A 471-amino-acid chain; its full sequence is U1 small nuclear ribonucleoprotein 70 kDa (471 aa).

Positions phenylalanine 48–arginine 78 are disordered. Over residues alanine 60 to arginine 78 the composition is skewed to basic and acidic residues. A required for interaction with U1 RNA region spans residues histidine 92 to glycine 205. The RRM domain occupies lysine 103–glycine 184. The disordered stretch occupies residues tryptophan 190–glutamate 471. Residues leucine 195–arginine 204 are compositionally biased toward gly residues. The span at asparagine 210–glutamate 246 shows a compositional bias: basic and acidic residues. The segment covering arginine 247–serine 261 has biased composition (basic residues). A compositionally biased stretch (basic and acidic residues) spans arginine 262–arginine 288. Positions aspartate 289–glutamate 298 are enriched in basic residues. Positions arginine 299 to alanine 316 are enriched in basic and acidic residues. Residues glutamate 317 to glutamine 326 show a composition bias toward acidic residues. A compositionally biased stretch (basic and acidic residues) spans isoleucine 339–proline 428.

Component of the U1 snRNP. The U1 snRNP is composed of the U1 snRNA and the 7 core Sm proteins snrpb, snrpd1, snrpd2, snrpd3, snrpe, snrpf and snrpg that assemble in a heptameric protein ring on the Sm site of the small nuclear RNA to form the core snRNP, and at least three U1 snRNP-specific proteins snrnp70/U1-70K, snrpa/U1-A and snrpc/U1-C.

The protein resides in the nucleus speckle. The protein localises to the nucleus. Its subcellular location is the nucleoplasm. Its function is as follows. Component of the spliceosomal U1 snRNP, which is essential for recognition of the pre-mRNA 5' splice-site and the subsequent assembly of the spliceosome. snrnp70 binds to the loop I region of U1-snRNA. This chain is U1 small nuclear ribonucleoprotein 70 kDa (snrnp70), found in Xenopus laevis (African clawed frog).